The chain runs to 550 residues: CTP synthase (550 aa).

The tract at residues 1–270 (MTKFVFVTGG…DRLICEELRL (270 aa)) is amidoligase domain. Ser13 is a binding site for CTP. Ser13 serves as a coordination point for UTP. ATP contacts are provided by residues 14-19 (SLGKGI) and Asp71. Mg(2+) contacts are provided by Asp71 and Glu144. Residues 151 to 153 (DIE), 191 to 196 (KTKPTQ), and Lys227 each bind CTP. Residues 191-196 (KTKPTQ) and Lys227 each bind UTP. The 253-residue stretch at 295 to 547 (TIGMVGKYVD…VEAALAGQQR (253 aa)) folds into the Glutamine amidotransferase type-1 domain. Gly356 is an L-glutamine binding site. The Nucleophile; for glutamine hydrolysis role is filled by Cys383. L-glutamine-binding positions include 384 to 387 (LGMQ), Glu407, and Arg473. Active-site residues include His520 and Glu522.

Belongs to the CTP synthase family. As to quaternary structure, homotetramer.

The enzyme catalyses UTP + L-glutamine + ATP + H2O = CTP + L-glutamate + ADP + phosphate + 2 H(+). It catalyses the reaction L-glutamine + H2O = L-glutamate + NH4(+). It carries out the reaction UTP + NH4(+) + ATP = CTP + ADP + phosphate + 2 H(+). It participates in pyrimidine metabolism; CTP biosynthesis via de novo pathway; CTP from UDP: step 2/2. Its activity is regulated as follows. Allosterically activated by GTP, when glutamine is the substrate; GTP has no effect on the reaction when ammonia is the substrate. The allosteric effector GTP functions by stabilizing the protein conformation that binds the tetrahedral intermediate(s) formed during glutamine hydrolysis. Inhibited by the product CTP, via allosteric rather than competitive inhibition. In terms of biological role, catalyzes the ATP-dependent amination of UTP to CTP with either L-glutamine or ammonia as the source of nitrogen. Regulates intracellular CTP levels through interactions with the four ribonucleotide triphosphates. This is CTP synthase from Cupriavidus pinatubonensis (strain JMP 134 / LMG 1197) (Cupriavidus necator (strain JMP 134)).